A 479-amino-acid chain; its full sequence is MTITHTYSSTAETSPGRVAIQTESEQITYHDWDRLVSQTANWLRSQPSMPNRVAILLPNSLAFLQLFAGAAAAGCTAIPIDTRWSPAECKERLSISNADLVVTLAFFKNKLTDSQTPVVLLDNCMADISEAAADPLPTIDPEHPFYMGFTSGSTGKPKAFTRSHRSWMESFTCTETDFSISSDDKVLIPGALMSSHFLYGAVSTLFLGGTVCLLKKFSPAKAKEWLCRESISVLYTVPTMTDALARIEGFPDSPVKIISSGADWPAESKKKLAAAWPHLKLYDFYGTSELSFVTFSSPEDSKRKPHSAGRPFHNVRIEIRNAGGERCQPGEIGKIFVKSPMRFSGYVNGSTPDEWMTVDDMGYVDEEGFLYISGRENGMIVYGGLNIFPEEIERVLLACPEVESAAVVGIPDEYWGEIAVAVILGNANARTLKAWCKQKLASYKIPKKWVFADSLPETSSGKIARSRVKKWLEESVQYK.

ATP-binding positions include 150-158 (TSGSTGKPK), Asp360, Arg375, and Lys462.

This sequence belongs to the ATP-dependent AMP-binding enzyme family.

Functionally, may be involved in fatty acid metabolism. This is an uncharacterized protein from Bacillus subtilis (strain 168).